The primary structure comprises 161 residues: Endoribonuclease YbeY (161 aa).

Residues His127, His131, and His137 each contribute to the Zn(2+) site.

The protein belongs to the endoribonuclease YbeY family. Zn(2+) serves as cofactor.

It localises to the cytoplasm. Single strand-specific metallo-endoribonuclease involved in late-stage 70S ribosome quality control and in maturation of the 3' terminus of the 16S rRNA. The sequence is that of Endoribonuclease YbeY from Listeria welshimeri serovar 6b (strain ATCC 35897 / DSM 20650 / CCUG 15529 / CIP 8149 / NCTC 11857 / SLCC 5334 / V8).